A 105-amino-acid chain; its full sequence is MIASKFGIGQQVRHKLLGYLGVVIDIDPEYSMEQPKADEIAANTDLRFAPWYHVVMEDEEGQPVHTYLAEAQLDGEAQEAHPEQPSLDELAESIRHQLQAPRLRN.

The interval 75–105 is disordered; sequence GEAQEAHPEQPSLDELAESIRHQLQAPRLRN.

This sequence belongs to the HspQ family.

It localises to the cytoplasm. Involved in the degradation of certain denaturated proteins, including DnaA, during heat shock stress. The sequence is that of Heat shock protein HspQ from Serratia proteamaculans (strain 568).